Consider the following 309-residue polypeptide: HPr kinase/phosphorylase (309 aa).

Active-site residues include His138 and Lys159. Residue 153–160 (GDSGIGKS) participates in ATP binding. Ser160 serves as a coordination point for Mg(2+). Residue Asp177 is the Proton acceptor; for phosphorylation activity. Proton donor; for dephosphorylation activity of the active site. Positions 201–210 (LEIRGVGIID) are important for the catalytic mechanism of both phosphorylation and dephosphorylation. Mg(2+) is bound at residue Glu202. The active site involves Arg243. Residues 264–269 (PVKTGR) are important for the catalytic mechanism of dephosphorylation.

This sequence belongs to the HPrK/P family. Homohexamer. It depends on Mg(2+) as a cofactor.

It catalyses the reaction [HPr protein]-L-serine + ATP = [HPr protein]-O-phospho-L-serine + ADP + H(+). The catalysed reaction is [HPr protein]-O-phospho-L-serine + phosphate + H(+) = [HPr protein]-L-serine + diphosphate. Functionally, catalyzes the ATP- as well as the pyrophosphate-dependent phosphorylation of a specific serine residue in HPr, a phosphocarrier protein of the phosphoenolpyruvate-dependent sugar phosphotransferase system (PTS). HprK/P also catalyzes the pyrophosphate-producing, inorganic phosphate-dependent dephosphorylation (phosphorolysis) of seryl-phosphorylated HPr (P-Ser-HPr). The two antagonistic activities of HprK/P are regulated by several intracellular metabolites, which change their concentration in response to the absence or presence of rapidly metabolisable carbon sources (glucose, fructose, etc.) in the growth medium. Therefore, by controlling the phosphorylation state of HPr, HPrK/P is a sensor enzyme that plays a major role in the regulation of carbon metabolism and sugar transport: it mediates carbon catabolite repression (CCR), and regulates PTS-catalyzed carbohydrate uptake and inducer exclusion. The protein is HPr kinase/phosphorylase of Streptococcus thermophilus (strain ATCC BAA-250 / LMG 18311).